A 797-amino-acid polypeptide reads, in one-letter code: Trafficking protein particle complex subunit 12 (797 aa).

Disordered stretches follow at residues 1 to 257 and 286 to 338; these read META…PSLS and SNPN…VPES. The segment covering 9–23 has biased composition (low complexity); it reads QSPSEASPSAQAGPE. The span at 29–43 shows a compositional bias: basic and acidic residues; the sequence is MSREEESQPLYHEET. Acidic residues predominate over residues 47-58; it reads GGDEFASEENEP. Basic and acidic residues-rich tracts occupy residues 66 to 75 and 107 to 121; these read FGDKLNEHMM and ATDH…KEVV. A phosphoserine mark is found at Ser-125 and Ser-128. At Thr-130 the chain carries Phosphothreonine. The segment covering 173 to 185 has biased composition (basic and acidic residues); it reads VGPKDSLAPREEQ. Positions 206–216 are enriched in polar residues; sequence IFSQATATPSQ. Low complexity predominate over residues 232-244; that stretch reads SPSFSSTSETSAK. Phosphoserine occurs at positions 234, 309, and 314. TPR repeat units follow at residues 607–640, 642–675, 682–715, and 716–749; these read GRVL…YPEQ, PQLL…TQKL, IMVL…DPTN, and AVAN…DPRH.

As to quaternary structure, component of the multisubunit TRAPP (transport protein particle) complex, which includes at least TRAPPC2, TRAPPC2L, TRAPPC3, TRAPPC3L, TRAPPC4, TRAPPC5, TRAPPC8, TRAPPC9, TRAPPC10, TRAPPC11 and TRAPPC12. Interacts with CENPE. Post-translationally, phosphorylated as the cells enter mitosis but is dephosphorylated at or before the onset of anaphase. The phosphorylated form recruits CENPE to kinetochores more efficiently than the non-phosphorylated form.

It localises to the endoplasmic reticulum-Golgi intermediate compartment. It is found in the nucleus. Component of the TRAPP complex, which is involved in endoplasmic reticulum to Golgi apparatus trafficking at a very early stage. Also plays a role in chromosome congression, kinetochore assembly and stability and controls the recruitment of CENPE to the kinetochores. The chain is Trafficking protein particle complex subunit 12 from Mus musculus (Mouse).